The chain runs to 392 residues: Elongation factor Tu 2 (392 aa).

A tr-type G domain is found at 10 to 201 (KPHVNIGTIG…AVDSYIPTPE (192 aa)). A G1 region spans residues 19–26 (GHVDHGKT). 19–26 (GHVDHGKT) is a GTP binding site. T26 serves as a coordination point for Mg(2+). A G2 region spans residues 55-59 (GITIS). The segment at 76-79 (DCPG) is G3. Residues 76 to 80 (DCPGH) and 131 to 134 (NKVD) contribute to the GTP site. The interval 131 to 134 (NKVD) is G4. The tract at residues 169 to 171 (SAL) is G5.

It belongs to the TRAFAC class translation factor GTPase superfamily. Classic translation factor GTPase family. EF-Tu/EF-1A subfamily. In terms of assembly, monomer.

It localises to the cytoplasm. The catalysed reaction is GTP + H2O = GDP + phosphate + H(+). Functionally, GTP hydrolase that promotes the GTP-dependent binding of aminoacyl-tRNA to the A-site of ribosomes during protein biosynthesis. The sequence is that of Elongation factor Tu 2 from Rhizobium etli (strain ATCC 51251 / DSM 11541 / JCM 21823 / NBRC 15573 / CFN 42).